The sequence spans 943 residues: Isoleucine--tRNA ligase (943 aa).

The 'HIGH' region motif lies at 58–68 (PYANGSIHIGH). Glu567 is an L-isoleucyl-5'-AMP binding site. The short motif at 608–612 (KMSKS) is the 'KMSKS' region element. Lys611 contacts ATP. Residues Cys906, Cys909, Cys926, and Cys929 each coordinate Zn(2+).

It belongs to the class-I aminoacyl-tRNA synthetase family. IleS type 1 subfamily. As to quaternary structure, monomer. Requires Zn(2+) as cofactor.

It localises to the cytoplasm. The catalysed reaction is tRNA(Ile) + L-isoleucine + ATP = L-isoleucyl-tRNA(Ile) + AMP + diphosphate. Catalyzes the attachment of isoleucine to tRNA(Ile). As IleRS can inadvertently accommodate and process structurally similar amino acids such as valine, to avoid such errors it has two additional distinct tRNA(Ile)-dependent editing activities. One activity is designated as 'pretransfer' editing and involves the hydrolysis of activated Val-AMP. The other activity is designated 'posttransfer' editing and involves deacylation of mischarged Val-tRNA(Ile). This chain is Isoleucine--tRNA ligase, found in Pseudomonas aeruginosa (strain UCBPP-PA14).